The primary structure comprises 360 residues: Biotin synthase (360 aa).

A disordered region spans residues 1-21 (MTQLNIAPASTDTAAASNNNA). One can recognise a Radical SAM core domain in the interval 62 to 289 (NTVQLSTLLS…RAMVRLSAGR (228 aa)). Residues Cys77, Cys81, and Cys84 each contribute to the [4Fe-4S] cluster site. [2Fe-2S] cluster is bound by residues Cys121, Cys152, Cys212, and Arg284.

Belongs to the radical SAM superfamily. Biotin synthase family. As to quaternary structure, homodimer. [4Fe-4S] cluster serves as cofactor. [2Fe-2S] cluster is required as a cofactor.

The enzyme catalyses (4R,5S)-dethiobiotin + (sulfur carrier)-SH + 2 reduced [2Fe-2S]-[ferredoxin] + 2 S-adenosyl-L-methionine = (sulfur carrier)-H + biotin + 2 5'-deoxyadenosine + 2 L-methionine + 2 oxidized [2Fe-2S]-[ferredoxin]. It participates in cofactor biosynthesis; biotin biosynthesis; biotin from 7,8-diaminononanoate: step 2/2. Catalyzes the conversion of dethiobiotin (DTB) to biotin by the insertion of a sulfur atom into dethiobiotin via a radical-based mechanism. The polypeptide is Biotin synthase (Paraburkholderia xenovorans (strain LB400)).